The following is a 465-amino-acid chain: Phospholipase A1-II 5 (465 aa).

Ser-233 serves as the catalytic Acyl-ester intermediate. Active-site charge relay system residues include Ser-233, Asp-297, and His-336.

Belongs to the AB hydrolase superfamily. Lipase family.

Its subcellular location is the cytoplasm. Acylhydrolase that catalyzes the hydrolysis of phospholipids at the sn-1 position. The chain is Phospholipase A1-II 5 from Oryza sativa subsp. japonica (Rice).